The chain runs to 100 residues: Regulatory protein NosR (100 aa).

Its subcellular location is the cell membrane. Functionally, transcriptional activator of the nitrous-oxide reductase gene NosZ. This chain is Regulatory protein NosR (nosR), found in Pseudomonas aeruginosa.